An 834-amino-acid chain; its full sequence is Translation initiation factor IF-2 (834 aa).

The interval 1–247 (MTEEKKFSGS…STPATVRKEQ (247 aa)) is disordered. The segment covering 45-101 (GGSRPSRPARPNNNNQNRPNNGGQSQNRNNQNRSNTSTGGQNRSNNGGNRNNRPGSR) has biased composition (low complexity). Residues 109–125 (PMIREKKNWSTKPREGQ) show a composition bias toward basic and acidic residues. Composition is skewed to low complexity over residues 149–165 (ASAA…ATKP) and 173–201 (ATKP…SARN). A compositionally biased stretch (basic residues) spans 224-233 (GSKKSRRIAA). A tr-type G domain is found at 335–504 (SRPPVVTIMG…LLQAEVLELK (170 aa)). Residues 344–351 (GHVDHGKT) form a G1 region. 344 to 351 (GHVDHGKT) serves as a coordination point for GTP. Residues 369–373 (GITQH) are G2. The interval 390 to 393 (DTPG) is G3. Residues 390-394 (DTPGH) and 444-447 (NKID) contribute to the GTP site. Residues 444 to 447 (NKID) are G4. The G5 stretch occupies residues 480–482 (SAK).

This sequence belongs to the TRAFAC class translation factor GTPase superfamily. Classic translation factor GTPase family. IF-2 subfamily.

It is found in the cytoplasm. Its function is as follows. One of the essential components for the initiation of protein synthesis. Protects formylmethionyl-tRNA from spontaneous hydrolysis and promotes its binding to the 30S ribosomal subunits. Also involved in the hydrolysis of GTP during the formation of the 70S ribosomal complex. This is Translation initiation factor IF-2 from Leuconostoc mesenteroides subsp. mesenteroides (strain ATCC 8293 / DSM 20343 / BCRC 11652 / CCM 1803 / JCM 6124 / NCDO 523 / NBRC 100496 / NCIMB 8023 / NCTC 12954 / NRRL B-1118 / 37Y).